The chain runs to 478 residues: Odorant receptor coreceptor (478 aa).

Topologically, residues 1–43 (MMKMKQQGLVADLLPNIRVMKTFGHFVFNYYNDNSSKYLHKVY) are cytoplasmic. A helical membrane pass occupies residues 44–64 (CCVNLFMLLLQFGLCAVNLIV). Residues 65 to 73 (ESADVDDLT) lie on the Extracellular side of the membrane. Residues 74 to 94 (ANTITLLFFTHSIVKICYFAI) form a helical membrane-spanning segment. The Cytoplasmic segment spans residues 95-133 (RSKYFYRTWAIWNNPNSHPLFAESNARYHAIALKKMRLL). Residues 134-154 (LFLVGGTTMLAAVAWTVLTFF) traverse the membrane as a helical segment. The Extracellular portion of the chain corresponds to 155–190 (EHPIRKIVDPVTNETEIIELPQLLIRSFYPFDAGKG). N167 is a glycosylation site (N-linked (GlcNAc...) asparagine). Residues 191–211 (ITHVLVLVYQFYWVLFMLIDA) form a helical membrane-spanning segment. The Cytoplasmic segment spans residues 212 to 349 (NSLDVLFCSW…IVRLVTAVGD (138 aa)). A disordered region spans residues 261–281 (SADHLRDGDNPPPPPPPQSDN). Residues 350–370 (AYGFALLLHMLTTTITLTLLA) form a helical membrane-spanning segment. Over 371–382 (YQATKVNGINVY) the chain is Extracellular. Residues 383-403 (AASTIGYILYTFGQVFLFCIF) traverse the membrane as a helical segment. The Cytoplasmic segment spans residues 404–454 (GNRLIEESTSVMEAAYSCHWYDGSEEAKTFVQIVCQQCQKAMSISGAKFFT). A helical membrane pass occupies residues 455-475 (VSLDLFASVLGAVVTYFMVLV). The Extracellular segment spans residues 476-478 (QLK).

The protein belongs to the insect chemoreceptor superfamily. Heteromeric odorant receptor channel (TC 1.A.69) family. Orco subfamily. Heterodimer with conventional odorant receptors (ORs). Present in antennae (at protein level).

It localises to the cell membrane. Functionally, odorant coreceptor which complexes with conventional odorant receptors (ORs) to form odorant-sensing units, providing sensitive and prolonged odorant signaling and calcium permeability. Obligate coreceptor of all odorant receptors. Orco is a universal and integral part of the functional odorant receptor, involved in the dendritic localization of other olfactory receptors. Can form functional ion channels in the absence of an odor-binding odorant receptor. Plays a central role in the perception of olfactory stimuli in ants and is essential for ant social organization. Required for pheromone sensing. Also required for the development and maintenance of odorant receptor neurons (ORNs) and of antennal lobe glomeruli. In Ooceraea biroi (Clonal raider ant), this protein is Odorant receptor coreceptor.